A 550-amino-acid chain; its full sequence is DNA gyrase subunit A (550 aa).

One can recognise a Topo IIA-type catalytic domain in the interval phenylalanine 1–asparagine 550. The O-(5'-phospho-DNA)-tyrosine intermediate role is filled by tyrosine 66. The DOD-type homing endonuclease domain maps to leucine 192–valine 332.

This sequence belongs to the type II topoisomerase GyrA/ParC subunit family. Heterotetramer, composed of two GyrA and two GyrB chains. In the heterotetramer, GyrA contains the active site tyrosine that forms a transient covalent intermediate with DNA, while GyrB binds cofactors and catalyzes ATP hydrolysis. In terms of processing, this protein undergoes a protein self splicing that involves a post-translational excision of the intervening region (intein) followed by peptide ligation.

The protein localises to the cytoplasm. The enzyme catalyses ATP-dependent breakage, passage and rejoining of double-stranded DNA.. Its function is as follows. A type II topoisomerase that negatively supercoils closed circular double-stranded (ds) DNA in an ATP-dependent manner to modulate DNA topology and maintain chromosomes in an underwound state. Negative supercoiling favors strand separation, and DNA replication, transcription, recombination and repair, all of which involve strand separation. Also able to catalyze the interconversion of other topological isomers of dsDNA rings, including catenanes and knotted rings. Type II topoisomerases break and join 2 DNA strands simultaneously in an ATP-dependent manner. The polypeptide is DNA gyrase subunit A (gyrA) (Mycobacterium gordonae).